The primary structure comprises 110 residues: Parvalbumin alpha (110 aa).

Residue serine 2 is modified to N-acetylserine. A phosphoserine mark is found at serine 2, serine 8, and serine 24. EF-hand domains are found at residues 39 to 74 (KSAD…FSSD) and 78 to 110 (LSAK…VAES). Ca(2+) contacts are provided by aspartate 52, aspartate 54, serine 56, phenylalanine 58, glutamate 60, and glutamate 63. At serine 66 the chain carries Phosphoserine. Positions 91, 93, 95, 97, and 102 each coordinate Ca(2+).

In terms of biological role, in muscle, parvalbumin is thought to be involved in relaxation after contraction. It binds two calcium ions. This is Parvalbumin alpha (Pvalb) from Rattus norvegicus (Rat).